The primary structure comprises 410 residues: O-methyltransferase afvC (410 aa).

S-adenosyl-L-methionine is bound by residues 253–254 (GG), aspartate 278, 299–300 (DF), and arginine 315. Histidine 319 (proton acceptor) is an active-site residue.

Belongs to the class I-like SAM-binding methyltransferase superfamily. Cation-independent O-methyltransferase family. COMT subfamily.

The protein operates within secondary metabolite biosynthesis. In terms of biological role, O-methyltransferase; part of the gene cluster that mediates the biosynthesis of aflavarin, a bicoumarin that exhibits anti-insectan activity against the fungivorous beetle C.hemipterus. This is O-methyltransferase afvC from Aspergillus flavus (strain ATCC 200026 / FGSC A1120 / IAM 13836 / NRRL 3357 / JCM 12722 / SRRC 167).